The sequence spans 98 residues: uncharacterized protein (98 aa).

The signal sequence occupies residues 1–19; the sequence is MTERRRALSLAAVVDSINL. The tract at residues 40 to 98 is disordered; it reads PPGGSFSGIKRESRRKRPSRNEIYGGGVLEQEVRMRRWSKTASPPVSLHHRPLGPARKP. Basic residues predominate over residues 87 to 98; that stretch reads LHHRPLGPARKP.

This is an uncharacterized protein from Homo sapiens (Human).